The sequence spans 134 residues: Protein NrdI (134 aa).

It belongs to the NrdI family.

Probably involved in ribonucleotide reductase function. This chain is Protein NrdI, found in Yersinia pseudotuberculosis serotype O:1b (strain IP 31758).